The following is a 261-amino-acid chain: Ribonuclease HII (261 aa).

One can recognise an RNase H type-2 domain in the interval K71 to S259. Residues D77, E78, and D169 each coordinate a divalent metal cation.

It belongs to the RNase HII family. Mn(2+) serves as cofactor. The cofactor is Mg(2+).

The protein resides in the cytoplasm. The catalysed reaction is Endonucleolytic cleavage to 5'-phosphomonoester.. Its function is as follows. Endonuclease that specifically degrades the RNA of RNA-DNA hybrids. The protein is Ribonuclease HII of Listeria monocytogenes serotype 4a (strain HCC23).